Consider the following 434-residue polypeptide: Asparagine--tRNA ligase (434 aa).

This sequence belongs to the class-II aminoacyl-tRNA synthetase family.

The protein localises to the cytoplasm. The catalysed reaction is tRNA(Asn) + L-asparagine + ATP = L-asparaginyl-tRNA(Asn) + AMP + diphosphate + H(+). In Pyrococcus furiosus (strain ATCC 43587 / DSM 3638 / JCM 8422 / Vc1), this protein is Asparagine--tRNA ligase (asnS).